A 239-amino-acid chain; its full sequence is NADH-quinone oxidoreductase subunit I 1 (239 aa).

4Fe-4S ferredoxin-type domains follow at residues 81 to 111 and 123 to 152; these read LVPR…IEAA and AKFV…MDSG. Residues Cys-91, Cys-94, Cys-97, Cys-101, Cys-132, Cys-135, Cys-138, and Cys-142 each coordinate [4Fe-4S] cluster.

Belongs to the complex I 23 kDa subunit family. In terms of assembly, NDH-1 is composed of 14 different subunits. Subunits NuoA, H, J, K, L, M, N constitute the membrane sector of the complex. It depends on [4Fe-4S] cluster as a cofactor.

The protein localises to the cell inner membrane. It carries out the reaction a quinone + NADH + 5 H(+)(in) = a quinol + NAD(+) + 4 H(+)(out). Functionally, NDH-1 shuttles electrons from NADH, via FMN and iron-sulfur (Fe-S) centers, to quinones in the respiratory chain. The immediate electron acceptor for the enzyme in this species is believed to be ubiquinone. Couples the redox reaction to proton translocation (for every two electrons transferred, four hydrogen ions are translocated across the cytoplasmic membrane), and thus conserves the redox energy in a proton gradient. The protein is NADH-quinone oxidoreductase subunit I 1 of Anaeromyxobacter dehalogenans (strain 2CP-C).